Reading from the N-terminus, the 787-residue chain is Protein PAT1 homolog 2 (787 aa).

5 disordered regions span residues 94-120 (KHLGVIGDRGSGSFSRESSTATDWTQD), 134-221 (EQVQ…NASP), 338-374 (VREHKHKSSHRSRKNRGGISQQTSDLASQKSESGLQF), 411-445 (LAKKSSGSRTKPQLYPSHLKDHQSRSRNSSDQQPQ), and 765-787 (VSESTTTRASASGGQINSEFVRG). Residues 105–120 (GSFSRESSTATDWTQD) show a composition bias toward polar residues. Positions 142 to 153 (SSQPQSSPNSNS) are enriched in low complexity. Composition is skewed to polar residues over residues 154 to 171 (LYRTSSYPQQQTQLQHYS), 180 to 198 (STFTSFPSPGKRSQQSSPS), and 208 to 221 (GGSQSNFSAPNASP). Serine 184 and serine 192 each carry phosphoserine. The segment covering 341-353 (HKHKSSHRSRKNR) has biased composition (basic residues). Polar residues-rich tracts occupy residues 355–373 (GISQQTSDLASQKSESGLQ) and 436–445 (SRNSSDQQPQ).

Activator of mRNA decapping. Involved in mRNA decay via decapping. In Arabidopsis thaliana (Mouse-ear cress), this protein is Protein PAT1 homolog 2.